The following is a 185-amino-acid chain: Adenine phosphoribosyltransferase (185 aa).

This sequence belongs to the purine/pyrimidine phosphoribosyltransferase family.

Its subcellular location is the cytoplasm. The enzyme catalyses AMP + diphosphate = 5-phospho-alpha-D-ribose 1-diphosphate + adenine. It participates in purine metabolism; AMP biosynthesis via salvage pathway; AMP from adenine: step 1/1. Its function is as follows. Catalyzes a salvage reaction resulting in the formation of AMP, that is energically less costly than de novo synthesis. The polypeptide is Adenine phosphoribosyltransferase (aprt-1) (Caenorhabditis elegans).